Reading from the N-terminus, the 401-residue chain is O-methyltransferase SAT18 (401 aa).

Asp-249 provides a ligand contact to S-adenosyl-L-methionine. The active-site Proton acceptor is the His-300.

It belongs to the class I-like SAM-binding methyltransferase superfamily. Cation-independent O-methyltransferase family.

It functions in the pathway mycotoxin biosynthesis. Its function is as follows. O-methyltransferase; part of the satratoxin SC3 cluster involved in the biosynthesis of satratoxins, trichothecene mycotoxins that are associated with human food poisonings. Satratoxins are suggested to be made by products of multiple gene clusters (SC1, SC2 and SC3) that encode 21 proteins in all, including polyketide synthases, acetyltransferases, and other enzymes expected to modify the trichothecene skeleton. SC1 encodes 10 proteins, SAT1 to SAT10. The largest are SAT8, which encodes a putative polyketide synthase (PKS) with a conventional non-reducing architecture, and SAT10, a putative protein containing four ankyrin repeats and thus may be involved in protein scaffolding. The putative short-chain reductase SAT3 may assist the PKS in some capacity. SAT6 contains a secretory lipase domain and acts probably as a trichothecene esterase. SAT5 encodes a putative acetyltransferase, and so, with SAT6, may affect endogenous protection from toxicity. The probable transcription factor SAT9 may regulate the expression of the SC1 cluster. SC2 encodes proteins SAT11 to SAT16, the largest of which encodes the putative reducing PKS SAT13. SAT11 is a cytochrome P450 monooxygenase, while SAT14 and SAT16 are probable acetyltransferases. The SC2 cluster may be regulated by the transcription factor SAT15. SC3 is a small cluster that encodes 5 proteins, SAT17 to SAT21. SAT21 is a putative MFS-type transporter which may have a role in exporting secondary metabolites. The four other proteins putatively encoded in SC3 include the taurine hydroxylase-like protein SAT17, the O-methyltransferase SAT18, the acetyltransferase SAT19, and the Cys6-type zinc finger SAT20, the latter being probably involved in regulation of SC3 expression. The sequence is that of O-methyltransferase SAT18 from Stachybotrys chartarum (strain CBS 109288 / IBT 7711) (Toxic black mold).